Reading from the N-terminus, the 973-residue chain is Vacuolar protein sorting-associated protein 18 homolog (973 aa).

Ala2 carries the post-translational modification N-acetylalanine. Phosphoserine is present on residues Ser3, Ser11, and Ser13. Lys362 carries the N6-acetyllysine modification. Residues 454–481 (EEIALKFLEARQEEALAEFLQRKLASLK) are a coiled coil. One copy of the CHCR repeat lies at 618–772 (GSRLDARQLI…VVQEEEDVQT (155 aa)). Position 689 is a phosphoserine (Ser689). Positions 802 to 848 (KEAICSSLKAYNHHIQELQREMEEATASAQRIRRDLQELRGRYGTVE) form a coiled coil. The segment at 853–947 (CATCDFPLLN…ELVAAECVYC (95 aa)) adopts an RING-type zinc-finger fold. The interval 903 to 929 (GAAPPPAKGSARAKEAEGGAATAGPSR) is disordered. A Phosphoserine modification is found at Ser912.

It belongs to the VPS18 family. In terms of assembly, core component of at least two putative endosomal tethering complexes, the homotypic fusion and vacuole protein sorting (HOPS) complex and the class C core vacuole/endosome tethering (CORVET) complex. Their common core is composed of the class C Vps proteins VPS11, VPS16, VPS18 and VPS33A, which in HOPS further associates with VPS39 and VPS41 and in CORVET with VPS8 and TGFBRAP1. Interacts with RAB5C. Interacts with HOOK1. Interacts with STX7, MON1B. Associates with adaptor protein complex 3 (AP-3) and clathrin:AP-3 complexes. Interacts with SYNPO2. Interacts with PLEKHM1. Ubiquitous. Expression was highest in heart and low in lung.

The protein resides in the late endosome membrane. It is found in the lysosome membrane. The protein localises to the early endosome. It localises to the cytoplasmic vesicle. Its subcellular location is the autophagosome. The protein resides in the clathrin-coated vesicle. Plays a role in vesicle-mediated protein trafficking to lysosomal compartments including the endocytic membrane transport and autophagic pathways. Believed to act as a core component of the putative HOPS and CORVET endosomal tethering complexes which are proposed to be involved in the Rab5-to-Rab7 endosome conversion probably implicating MON1A/B, and via binding SNAREs and SNARE complexes to mediate tethering and docking events during SNARE-mediated membrane fusion. The HOPS complex is proposed to be recruited to Rab7 on the late endosomal membrane and to regulate late endocytic, phagocytic and autophagic traffic towards lysosomes. The CORVET complex is proposed to function as a Rab5 effector to mediate early endosome fusion probably in specific endosome subpopulations. Required for fusion of endosomes and autophagosomes with lysosomes. Involved in dendrite development of Pukinje cells. In Homo sapiens (Human), this protein is Vacuolar protein sorting-associated protein 18 homolog.